Consider the following 260-residue polypeptide: Major prion protein (260 aa).

A signal peptide spans 1–22 (MANLGCWMLVLFVATWSDLGLC). Residues 23–237 (KKRPKPGGWN…ESQAYYQRGS (215 aa)) are interaction with GRB2, ERI3 and SYN1. The tract at residues 26-112 (PKPGGWNTGG…HNQWNKPSKP (87 aa)) is disordered. 6 tandem repeats follow at residues 51–58 (PQGGGWGQ), 59–66 (PHGGGWGQ), 67–74 (PHGGGWGQ), 75–82 (PHGGGWGQ), 83–90 (PHGGGWGQ), and 91–98 (PHGGGWGQ). The tract at residues 51 to 98 (PQGGGWGQPHGGGWGQPHGGGWGQPHGGGWGQPHGGGWGQPHGGGWGQ) is 6 X 8 AA tandem repeats of P-H-G-G-G-W-G-Q. The segment covering 52 to 102 (QGGGWGQPHGGGWGQPHGGGWGQPHGGGWGQPHGGGWGQPHGGGWGQGGGT) has biased composition (gly residues). Residues His68, Gly69, Gly70, His76, Gly77, Gly78, His84, Gly85, Gly86, His92, Gly93, and Gly94 each coordinate Cu(2+). Cys186 and Cys221 are oxidised to a cystine. N-linked (GlcNAc...) asparagine glycosylation is found at Asn188 and Asn204. Ser237 is lipidated: GPI-anchor amidated serine. The propeptide at 238–260 (SMVLFSSPPVILLISFLIFLIVG) is removed in mature form.

Belongs to the prion family. Monomer and homodimer. Has a tendency to aggregate into amyloid fibrils containing a cross-beta spine, formed by a steric zipper of superposed beta-strands. Soluble oligomers may represent an intermediate stage on the path to fibril formation. Copper binding may promote oligomerization. Interacts with GRB2, APP, ERI3/PRNPIP and SYN1. Mislocalized cytosolically exposed PrP interacts with MGRN1; this interaction alters MGRN1 subcellular location and causes lysosomal enlargement. Interacts with KIAA1191.

It is found in the cell membrane. Its subcellular location is the golgi apparatus. In terms of biological role, its primary physiological function is unclear. Has cytoprotective activity against internal or environmental stresses. May play a role in neuronal development and synaptic plasticity. May be required for neuronal myelin sheath maintenance. May play a role in iron uptake and iron homeostasis. Soluble oligomers are toxic to cultured neuroblastoma cells and induce apoptosis (in vitro). Association with GPC1 (via its heparan sulfate chains) targets PRNP to lipid rafts. Also provides Cu(2+) or Zn(2+) for the ascorbate-mediated GPC1 deaminase degradation of its heparan sulfate side chains. This Saimiri sciureus (Common squirrel monkey) protein is Major prion protein (PRNP).